The primary structure comprises 163 residues: Small ribosomal subunit protein uS9 (163 aa).

A compositionally biased stretch (low complexity) spans 1 to 25; sequence MAENTNNSAVTETEETTAAFTTETN. A disordered region spans residues 1-40; that stretch reads MAENTNNSAVTETEETTAAFTTETNSGAGTGTSTIAPGYG.

It belongs to the universal ribosomal protein uS9 family.

The chain is Small ribosomal subunit protein uS9 from Bifidobacterium animalis subsp. lactis (strain AD011).